We begin with the raw amino-acid sequence, 309 residues long: tRNA pseudouridine synthase B (309 aa).

Asp-51 acts as the Nucleophile in catalysis.

This sequence belongs to the pseudouridine synthase TruB family. Type 1 subfamily.

It catalyses the reaction uridine(55) in tRNA = pseudouridine(55) in tRNA. Responsible for synthesis of pseudouridine from uracil-55 in the psi GC loop of transfer RNAs. This chain is tRNA pseudouridine synthase B, found in Coxiella burnetii (strain RSA 331 / Henzerling II).